Reading from the N-terminus, the 198-residue chain is V-type proton ATPase subunit E (198 aa).

This sequence belongs to the V-ATPase E subunit family.

In terms of biological role, produces ATP from ADP in the presence of a proton gradient across the membrane. The sequence is that of V-type proton ATPase subunit E from Borrelia turicatae (strain 91E135).